A 269-amino-acid polypeptide reads, in one-letter code: F-box protein At5g52880 (269 aa).

The F-box domain maps to 109–155 (DIDIPSLPQDILIHIFSFLEISSLVSSAQVSRSWNQATHENSLWQSQ).

The chain is F-box protein At5g52880 from Arabidopsis thaliana (Mouse-ear cress).